A 376-amino-acid chain; its full sequence is MYKLLKKDGSSRRGEFSTPHGVVQTPVFMNVGTLAAIKGAVSTEDLKEIGCQIELSNTYHLSLRPGDEVIRKLGGLHKFMNWDRPILTDSGGFQVFSLSGMRKIKEEGVYFNSHIDGRKIFMGPEESMRIQSNLASTVAMAFDECVENPAPKEYVEDSVKRTTRWLKRCKIEIDRLNSMPHTINNKQMLFGINQGGVHDDIRMEHAKIISDMDLDGYAIGGLAVGETHEEMYRVLEKVVPNLPENKPIYLMGVGTPANILEAVERGVDFFDCVMPSRNGRHSHVFTSYGVIHLLNAKYELDDNPIDSECSCPTCKNYTRAYIRHLFKAKEMLAMRLCVIHNLYFYNNLMKEIRESIDKGNFLQYKKEKLEKWNETV.

The active-site Proton acceptor is D89. Residues D89–F93, D143, Q194, and G221 each bind substrate. Residues G252–N258 are RNA binding. Residue D271 is the Nucleophile of the active site. The Zn(2+) site is built by C309, C311, C314, and H340.

It belongs to the queuine tRNA-ribosyltransferase family. In terms of assembly, homodimer. Within each dimer, one monomer is responsible for RNA recognition and catalysis, while the other monomer binds to the replacement base PreQ1. Zn(2+) serves as cofactor.

The enzyme catalyses 7-aminomethyl-7-carbaguanine + guanosine(34) in tRNA = 7-aminomethyl-7-carbaguanosine(34) in tRNA + guanine. The protein operates within tRNA modification; tRNA-queuosine biosynthesis. Its function is as follows. Catalyzes the base-exchange of a guanine (G) residue with the queuine precursor 7-aminomethyl-7-deazaguanine (PreQ1) at position 34 (anticodon wobble position) in tRNAs with GU(N) anticodons (tRNA-Asp, -Asn, -His and -Tyr). Catalysis occurs through a double-displacement mechanism. The nucleophile active site attacks the C1' of nucleotide 34 to detach the guanine base from the RNA, forming a covalent enzyme-RNA intermediate. The proton acceptor active site deprotonates the incoming PreQ1, allowing a nucleophilic attack on the C1' of the ribose to form the product. After dissociation, two additional enzymatic reactions on the tRNA convert PreQ1 to queuine (Q), resulting in the hypermodified nucleoside queuosine (7-(((4,5-cis-dihydroxy-2-cyclopenten-1-yl)amino)methyl)-7-deazaguanosine). The protein is Queuine tRNA-ribosyltransferase of Clostridium kluyveri (strain NBRC 12016).